Consider the following 494-residue polypeptide: Probable cytosol aminopeptidase (494 aa).

Positions 260 and 265 each coordinate Mn(2+). Lys-272 is a catalytic residue. Residues Asp-283, Asp-342, and Glu-344 each coordinate Mn(2+). Residue Arg-346 is part of the active site.

This sequence belongs to the peptidase M17 family. Mn(2+) is required as a cofactor.

It is found in the cytoplasm. It catalyses the reaction Release of an N-terminal amino acid, Xaa-|-Yaa-, in which Xaa is preferably Leu, but may be other amino acids including Pro although not Arg or Lys, and Yaa may be Pro. Amino acid amides and methyl esters are also readily hydrolyzed, but rates on arylamides are exceedingly low.. It carries out the reaction Release of an N-terminal amino acid, preferentially leucine, but not glutamic or aspartic acids.. Presumably involved in the processing and regular turnover of intracellular proteins. Catalyzes the removal of unsubstituted N-terminal amino acids from various peptides. This chain is Probable cytosol aminopeptidase, found in Bacillus cereus (strain Q1).